Reading from the N-terminus, the 80-residue chain is Protein transport protein SSS1 (80 aa).

The Cytoplasmic segment spans residues 1 to 46 (MARASEKGEEKKQSNNQVEKLVEAPVEFVREGTQFLAKCKKPDLKE). Residues 47–75 (YTKIVKAVGIGFIAVGIIGYAIKLIHIPI) form a helical membrane-spanning segment. The Extracellular segment spans residues 76 to 80 (RYVIV).

Belongs to the SecE/SEC61-gamma family. Component of the heterotrimeric Sec61 complex, which is composed of SSH1, SBH1 and SSS1. Presumably three to four Sec61 heterotrimers assemble into an oligomeric ring with a central aqueous pore. In cotranslational ER import, the pore diameter varies from 9-15 A in a ribosome-free resting state to 40-60 A in a functional state when associated with the ribosome. The Sec61 complex is part of a channel-forming translocon complex whose composition seem to change dependent upon different functional states. During post-translational ER import the Sec61 complex associates with the Sec62/63 complex to form the Sec complex. SSH1 is a component of the heterotrimeric Ssh1 complex, which is composed of SSH1, SBH2 and SSS1. SSS1 interacts with OST1, OST4, SWP1 and WBP1, components of the OT complex.

It is found in the endoplasmic reticulum membrane. In terms of biological role, part of the Sec61 complex, which is the major component of channel-forming translocon complex that mediates protein translocation across the endoplasmic reticulum (ER). The functional states of the translocon complex include co- and post-translational ER import, cotranslational membrane protein integration and retrograde transport of misfolded proteins out of the ER. In the cotranslational pathway, ribosomes synthesizing presecretory proteins are targeted to the translocon by the cytosolic signal recognition particle (SRP) and its ER-localized receptor. The association of the Sec61 complex with the ribosome is mediated by the 28S rRNA of the large ribosomal subunit. SRP-independent post-translational translocation requires the association of additional factors, such as the Sec62/63 complex and KAR2. Also part of the Ssh1 complex, which probably is the major component of a channel-forming translocon complex that may function exclusively in the cotranslational pathway of protein ER import. This chain is Protein transport protein SSS1 (SSS1), found in Saccharomyces cerevisiae (strain ATCC 204508 / S288c) (Baker's yeast).